Reading from the N-terminus, the 682-residue chain is DNA-directed RNA polymerase subunit beta' (682 aa).

Residues cysteine 69, cysteine 71, cysteine 87, and cysteine 90 each coordinate Zn(2+). Mg(2+) contacts are provided by aspartate 489, aspartate 491, and aspartate 493.

Belongs to the RNA polymerase beta' chain family. RpoC1 subfamily. In terms of assembly, in plastids the minimal PEP RNA polymerase catalytic core is composed of four subunits: alpha, beta, beta', and beta''. When a (nuclear-encoded) sigma factor is associated with the core the holoenzyme is formed, which can initiate transcription. Requires Mg(2+) as cofactor. The cofactor is Zn(2+).

The protein localises to the plastid. It is found in the chloroplast. The enzyme catalyses RNA(n) + a ribonucleoside 5'-triphosphate = RNA(n+1) + diphosphate. Its function is as follows. DNA-dependent RNA polymerase catalyzes the transcription of DNA into RNA using the four ribonucleoside triphosphates as substrates. In Oryza nivara (Indian wild rice), this protein is DNA-directed RNA polymerase subunit beta'.